A 150-amino-acid polypeptide reads, in one-letter code: uncharacterized protein (150 aa).

This is an uncharacterized protein from Escherichia coli O157:H7.